Consider the following 86-residue polypeptide: Large ribosomal subunit protein uL23 (86 aa).

The protein belongs to the universal ribosomal protein uL23 family. In terms of assembly, part of the 50S ribosomal subunit. Contacts protein L29.

Binds to 23S rRNA. One of the proteins that surrounds the polypeptide exit tunnel on the outside of the ribosome. This is Large ribosomal subunit protein uL23 from Pyrococcus abyssi (strain GE5 / Orsay).